The following is a 391-amino-acid chain: Elongation factor Tu (391 aa).

The region spanning 10–201 is the tr-type G domain; the sequence is KPHVNIGTIG…EVDKYIPTPE (192 aa). Residues 19–26 are G1; that stretch reads GHVDHGKT. 19–26 provides a ligand contact to GTP; sequence GHVDHGKT. Thr26 provides a ligand contact to Mg(2+). Residues 55–59 are G2; sequence GITIS. The interval 76-79 is G3; that stretch reads DCPG. Residues 76 to 80 and 131 to 134 contribute to the GTP site; these read DCPGH and NKVD. Residues 131–134 are G4; the sequence is NKVD. Positions 169–171 are G5; the sequence is SAL.

The protein belongs to the TRAFAC class translation factor GTPase superfamily. Classic translation factor GTPase family. EF-Tu/EF-1A subfamily. As to quaternary structure, monomer.

Its subcellular location is the cytoplasm. The catalysed reaction is GTP + H2O = GDP + phosphate + H(+). GTP hydrolase that promotes the GTP-dependent binding of aminoacyl-tRNA to the A-site of ribosomes during protein biosynthesis. The chain is Elongation factor Tu from Chelativorans sp. (strain BNC1).